A 128-amino-acid chain; its full sequence is Large ribosomal subunit protein bL17 (128 aa).

Belongs to the bacterial ribosomal protein bL17 family. Part of the 50S ribosomal subunit. Contacts protein L32.

In Streptococcus pneumoniae serotype 2 (strain D39 / NCTC 7466), this protein is Large ribosomal subunit protein bL17.